A 71-amino-acid chain; its full sequence is Large ribosomal subunit protein bL31 (71 aa).

Residues Cys16, Cys18, Cys37, and Cys40 each contribute to the Zn(2+) site.

This sequence belongs to the bacterial ribosomal protein bL31 family. Type A subfamily. As to quaternary structure, part of the 50S ribosomal subunit. Zn(2+) serves as cofactor.

In terms of biological role, binds the 23S rRNA. This chain is Large ribosomal subunit protein bL31, found in Pseudomonas putida (strain W619).